A 528-amino-acid polypeptide reads, in one-letter code: MGDAPSPEEKLHLITRNLQEVLGEEKLKEILKERELKIYWGTATTGKPHVAYFVPMSKIADFLKAGCEVTILFADLHAYLDNMKAPWELLELRVSYYENVIKAMLESIGVPLEKLKFIKGTDYQLSKEYTLDVYRLSSVVTQHDSKKAGAEVVKQVEHPLLSGLLYPGLQALDEEYLKVDAQFGGIDQRKIFTFAEKYLPALGYSKRVHLMNPMVPGLTGSKMSSSEEESKIDLLDRKEDVKKKLKKAFCEPGNVENNGVLSFIKHVLFPLKSEFVILRDEKWGGNKTYTAYVDLEKDFAAEVVHPGDLKNSVEVALNKLLDPIREKFNTPALKKLASAAYPDPSKQKPMAKGPAKNSEPEEVIPSRLDIRVGKIITVEKHPDADSLYVEKIDVGEAEPRTVVSGLVQFVPKEELQDRLVVVLCNLKPQKMRGVESQGMLLCASIEGINRQVEPLDPPAGSAPGEHVFVKGYEKGQPDEELKPKKKVFEKLQADFKISEECIAQWKQTNFMTKLGSISCKSLKGGNIS.

The residue at position 1 (methionine 1) is an N-acetylmethionine. Glycine 2 bears the N-acetylglycine; in Tyrosine--tRNA ligase, cytoplasmic, N-terminally processed mark. Residue tyrosine 39 coordinates L-tyrosine. Tyrosine 39 is a binding site for trans-resveratrol. The 'HIGH' region signature appears at 44–52 (TTGKPHVAY). L-tyrosine is bound by residues tyrosine 166, glutamine 170, aspartate 173, and glutamine 188. Glutamine 170 and aspartate 173 together coordinate trans-resveratrol. N6-acetyllysine is present on lysine 197. Serine 205 carries the phosphoserine modification. Lysine 206 carries the post-translational modification N6-acetyllysine. The 'KMSKS' region signature appears at 222-226 (KMSSS). Residues 242 to 247 (KKKLKK) carry the Nuclear localization signal motif. Positions 339 to 363 (AAYPDPSKQKPMAKGPAKNSEPEEV) are disordered. The tRNA-binding domain occupies 364-468 (IPSRLDIRVG…AGSAPGEHVF (105 aa)). Serine 386 carries the phosphoserine modification. N6-acetyllysine occurs at positions 474, 482, and 490.

It belongs to the class-I aminoacyl-tRNA synthetase family. As to quaternary structure, homodimer. Interacts (when binding to resveratrol) with PARP1; interaction stimulates the poly-ADP-ribosyltransferase activity of PARP1.

It localises to the cytoplasm. The protein resides in the nucleus. The catalysed reaction is tRNA(Tyr) + L-tyrosine + ATP = L-tyrosyl-tRNA(Tyr) + AMP + diphosphate + H(+). Resveratrol strongly inhibits the tyrosine--tRNA ligase activity. Tyrosine--tRNA ligase that catalyzes the attachment of tyrosine to tRNA(Tyr) in a two-step reaction: tyrosine is first activated by ATP to form Tyr-AMP and then transferred to the acceptor end of tRNA(Tyr). Also acts as a positive regulator of poly-ADP-ribosylation in the nucleus, independently of its tyrosine--tRNA ligase activity. Activity is switched upon resveratrol-binding: resveratrol strongly inhibits the tyrosine--tRNA ligase activity and promotes relocalization to the nucleus, where YARS1 specifically stimulates the poly-ADP-ribosyltransferase activity of PARP1. This Homo sapiens (Human) protein is Tyrosine--tRNA ligase, cytoplasmic.